A 208-amino-acid chain; its full sequence is Small ribosomal subunit protein uS4 (208 aa).

The 66-residue stretch at 98–163 folds into the S4 RNA-binding domain; sequence QRLDNVVYRM…NPQITRAIEL (66 aa).

This sequence belongs to the universal ribosomal protein uS4 family. In terms of assembly, part of the 30S ribosomal subunit. Contacts protein S5. The interaction surface between S4 and S5 is involved in control of translational fidelity.

Its function is as follows. One of the primary rRNA binding proteins, it binds directly to 16S rRNA where it nucleates assembly of the body of the 30S subunit. Functionally, with S5 and S12 plays an important role in translational accuracy. This Campylobacter jejuni subsp. jejuni serotype O:6 (strain 81116 / NCTC 11828) protein is Small ribosomal subunit protein uS4.